Here is a 638-residue protein sequence, read N- to C-terminus: Phosphomethylpyrimidine synthase (638 aa).

Substrate contacts are provided by residues asparagine 236, methionine 265, tyrosine 294, histidine 330, serine 350–glycine 352, aspartate 391–arginine 394, and glutamate 430. Histidine 434 provides a ligand contact to Zn(2+). Tyrosine 457 is a substrate binding site. Histidine 498 serves as a coordination point for Zn(2+). Residues cysteine 578, cysteine 581, and cysteine 586 each contribute to the [4Fe-4S] cluster site. Residues alanine 608–serine 624 are compositionally biased toward low complexity. Residues alanine 608–arginine 633 are disordered.

The protein belongs to the ThiC family. In terms of assembly, homodimer. It depends on [4Fe-4S] cluster as a cofactor.

It catalyses the reaction 5-amino-1-(5-phospho-beta-D-ribosyl)imidazole + S-adenosyl-L-methionine = 4-amino-2-methyl-5-(phosphooxymethyl)pyrimidine + CO + 5'-deoxyadenosine + formate + L-methionine + 3 H(+). It functions in the pathway cofactor biosynthesis; thiamine diphosphate biosynthesis. In terms of biological role, catalyzes the synthesis of the hydroxymethylpyrimidine phosphate (HMP-P) moiety of thiamine from aminoimidazole ribotide (AIR) in a radical S-adenosyl-L-methionine (SAM)-dependent reaction. The polypeptide is Phosphomethylpyrimidine synthase (Hahella chejuensis (strain KCTC 2396)).